Reading from the N-terminus, the 296-residue chain is Sulfotransferase 1C2 (296 aa).

49-54 (KSGTTW) is a binding site for 3'-phosphoadenylyl sulfate. Position 107–109 (107–109 (RTH)) interacts with substrate. His-109 functions as the Proton acceptor in the catalytic mechanism. 3'-phosphoadenylyl sulfate-binding positions include Arg-131, Ser-139, Tyr-194, and 228-233 (TSFEKM). Ser-139 is modified (phosphoserine). A Phosphoserine modification is found at Ser-254. 256–260 (FMRKG) is a binding site for 3'-phosphoadenylyl sulfate.

Belongs to the sulfotransferase 1 family. Highly expressed in kidney and at lower levels in stomach and liver. More specifically found in the epithelia of proximal tubules of the kidney, of the bile duct, of the gastric mucosa, and in hepatocytes.

It localises to the cytoplasm. It is found in the lysosome. The protein resides in the mitochondrion. The enzyme catalyses a phenol + 3'-phosphoadenylyl sulfate = an aryl sulfate + adenosine 3',5'-bisphosphate + H(+). The catalysed reaction is cholesterol + 3'-phosphoadenylyl sulfate = cholesterol sulfate + adenosine 3',5'-bisphosphate + H(+). Functionally, sulfotransferase that utilizes 3'-phospho-5'-adenylyl sulfate (PAPS) to catalyze the sulfate conjugation of phenolic compounds. Does not transfer sulfate to steroids, dopamine, acetaminophen, or alpha-naphthol. Except in mitochondria, where it can add sulfate to cholesterol producing cholesterol sulfate, which alters mitochondrial membrane organization, and impacts protein complex mobility increasing state-III respiration, thereby modulating mitochondrial respiration. Catalyzes the sulfation of the carcinogenic N-hydroxy-2-acetylaminofluorene leading to highly reactive intermediates capable of forming DNA adducts, potentially resulting in mutagenesis. In Rattus norvegicus (Rat), this protein is Sulfotransferase 1C2 (Sult1c2).